The chain runs to 173 residues: Alpha-crystallin A chain (173 aa).

Residue Met-1 is modified to N-acetylmethionine. Positions 52–162 (LFRTVLESGI…SHNERPIPVS (111 aa)) constitute a sHSP domain. Zn(2+)-binding residues include His-100, Glu-102, His-107, and His-154. The disordered stretch occupies residues 144-173 (PKVQSNTDPSHNERPIPVSREEKPTSAPPS). Over residues 153–167 (SHNERPIPVSREEKP) the composition is skewed to basic and acidic residues. Residue Ser-162 is glycosylated (O-linked (GlcNAc) serine).

It belongs to the small heat shock protein (HSP20) family. Heteropolymer composed of three CRYAA and one CRYAB subunits. Inter-subunit bridging via zinc ions enhances stability, which is crucial as there is no protein turn over in the lens. Can also form homodimers and homotetramers (dimers of dimers) which serve as the building blocks of homooligomers. Within homooligomers, the zinc-binding motif is created from residues of 3 different molecules. His-100 and Glu-102 from one molecule are ligands of the zinc ion, and His-107 and His-154 residues from additional molecules complete the site with tetrahedral coordination geometry.

Its subcellular location is the cytoplasm. It is found in the nucleus. Contributes to the transparency and refractive index of the lens. May act as a chaperone, preventing aggregation of various proteins under a wide range of stress conditions. In Tupinambis teguixin (Golden tegu), this protein is Alpha-crystallin A chain (CRYAA).